The sequence spans 147 residues: Hemoglobin subunit epsilon (147 aa).

Residues 3–147 (HFTPEEKCII…VAIALAHKYH (145 aa)) enclose the Globin domain. The residue at position 51 (S51) is a Phosphoserine. 2 residues coordinate heme b: H64 and H93.

The protein belongs to the globin family. In terms of tissue distribution, red blood cells.

Functionally, hemoglobin epsilon chain is a beta-type chain found in early embryos. This chain is Hemoglobin subunit epsilon (HBE1), found in Oryctolagus cuniculus (Rabbit).